The sequence spans 335 residues: Cell division protein ZipA (335 aa).

Topologically, residues 1-4 (MDLN) are periplasmic. The helical transmembrane segment at 5–25 (AILIILGVIALIILVAHGIWS) threads the bilayer. Over 26–335 (NRCEKSQYFE…AERDYLARVS (310 aa)) the chain is Cytoplasmic.

This sequence belongs to the ZipA family. As to quaternary structure, interacts with FtsZ via their C-terminal domains.

Its subcellular location is the cell inner membrane. Its function is as follows. Essential cell division protein that stabilizes the FtsZ protofilaments by cross-linking them and that serves as a cytoplasmic membrane anchor for the Z ring. Also required for the recruitment to the septal ring of downstream cell division proteins. The chain is Cell division protein ZipA from Histophilus somni (strain 129Pt) (Haemophilus somnus).